Here is a 318-residue protein sequence, read N- to C-terminus: Homoserine kinase (318 aa).

97-107 (PIGSGLGSSAC) is a binding site for ATP.

This sequence belongs to the GHMP kinase family. Homoserine kinase subfamily.

The protein resides in the cytoplasm. The enzyme catalyses L-homoserine + ATP = O-phospho-L-homoserine + ADP + H(+). It participates in amino-acid biosynthesis; L-threonine biosynthesis; L-threonine from L-aspartate: step 4/5. Functionally, catalyzes the ATP-dependent phosphorylation of L-homoserine to L-homoserine phosphate. This chain is Homoserine kinase, found in Aliivibrio fischeri (strain ATCC 700601 / ES114) (Vibrio fischeri).